Reading from the N-terminus, the 1228-residue chain is Minor fimbrium subunit Mfa5 (1228 aa).

A signal peptide spans Met-1–Ala-25. Residues Asp-144–Ala-267 enclose the VWFA domain.

In terms of assembly, minor fimbriae are composed of a structural subunit, most often Mfa1, and the accessory subunits Mfa3, Mfa4 and Mfa5. Fimbrium assembly occurs by linear, head-to-tail oligomerization of fimbrial subunits. This is mediated via insertion of a C-terminal beta-strand from one subunit into a groove in the N-terminal domain of the following subunit.

Its subcellular location is the fimbrium. Accessory subunit of the minor fimbriae. These filamentous pili are attached to the cell surface; they mediate biofilm formation, adhesion onto host cells and onto other bacteria that are part of the oral microbiome. They play an important role in invasion of periodontal tissues and are recognized as major virulence factors. Fimbrium subunits from different strains have highly divergent sequences, and this correlates with pathogenicity. The protein is Minor fimbrium subunit Mfa5 of Porphyromonas gingivalis (strain ATCC 33277 / DSM 20709 / CIP 103683 / JCM 12257 / NCTC 11834 / 2561).